The primary structure comprises 605 residues: Elongation factor 4 (605 aa).

The tr-type G domain occupies 8–190 (RRVRNFCIVA…AIITRIPPPQ (183 aa)). GTP is bound by residues 20-25 (DHGKST) and 137-140 (NKID).

It belongs to the TRAFAC class translation factor GTPase superfamily. Classic translation factor GTPase family. LepA subfamily.

The protein resides in the cell inner membrane. The catalysed reaction is GTP + H2O = GDP + phosphate + H(+). In terms of biological role, required for accurate and efficient protein synthesis under certain stress conditions. May act as a fidelity factor of the translation reaction, by catalyzing a one-codon backward translocation of tRNAs on improperly translocated ribosomes. Back-translocation proceeds from a post-translocation (POST) complex to a pre-translocation (PRE) complex, thus giving elongation factor G a second chance to translocate the tRNAs correctly. Binds to ribosomes in a GTP-dependent manner. The sequence is that of Elongation factor 4 from Treponema pallidum (strain Nichols).